Consider the following 112-residue polypeptide: 2Fe-2S ferredoxin (112 aa).

A 2Fe-2S ferredoxin-type domain is found at 5-107; it reads IKVTFIINDG…GIKVRIPATT (103 aa). [2Fe-2S] cluster contacts are provided by Cys-42, Cys-48, Cys-51, and Cys-88.

This sequence belongs to the adrenodoxin/putidaredoxin family. It depends on [2Fe-2S] cluster as a cofactor.

Functionally, ferredoxin are iron-sulfur proteins that transfer electrons in a wide variety of metabolic reactions. The polypeptide is 2Fe-2S ferredoxin (fdxB) (Rickettsia conorii (strain ATCC VR-613 / Malish 7)).